The sequence spans 226 residues: uncharacterized protein (226 aa).

This is an uncharacterized protein from Mycobacterium bovis (strain ATCC BAA-935 / AF2122/97).